Consider the following 357-residue polypeptide: GDP-polyphosphate phosphotransferase (357 aa).

The tract at residues 1–83 is disordered; the sequence is MSEEPTVSPP…DSTSASLPAN (83 aa). Over residues 14–25 the composition is skewed to low complexity; the sequence is QPAAQPAKPARP. A compositionally biased stretch (basic residues) spans 26–40; it reads AARRAPRKPATRRPR.

It belongs to the polyphosphate kinase 2 (PPK2) family. Class I subfamily. Homotetramer. Also forms octamers. Mg(2+) serves as cofactor. Mn(2+) is required as a cofactor.

The catalysed reaction is [phosphate](n) + GTP = [phosphate](n+1) + GDP. The enzyme catalyses [phosphate](n) + ATP = [phosphate](n+1) + ADP. In terms of biological role, uses inorganic polyphosphate (polyP) as a donor to convert GDP to GTP and ADP to ATP. Shows a preference for GDP. Can also catalyze the synthesis of polyP from GTP or ATP, but the rate of polyP utilization is 75-fold greater than the rate of polyP synthesis. The sequence is that of GDP-polyphosphate phosphotransferase from Pseudomonas aeruginosa (strain ATCC 15692 / DSM 22644 / CIP 104116 / JCM 14847 / LMG 12228 / 1C / PRS 101 / PAO1).